Consider the following 232-residue polypeptide: LexA repressor (232 aa).

Positions 36-56 (IREIGDAAGLQSTSSVAYQLK) form a DNA-binding region, H-T-H motif. Residues 62–86 (GFLRRDPNKPRAVDVRHLPETDNRT) are compositionally biased toward basic and acidic residues. Positions 62–107 (GFLRRDPNKPRAVDVRHLPETDNRTKAGPKAKARPTAGASPQPELA) are disordered. Active-site for autocatalytic cleavage activity residues include Ser-156 and Lys-193.

It belongs to the peptidase S24 family. Homodimer.

It carries out the reaction Hydrolysis of Ala-|-Gly bond in repressor LexA.. Functionally, represses a number of genes involved in the response to DNA damage (SOS response), including recA and lexA. In the presence of single-stranded DNA, RecA interacts with LexA causing an autocatalytic cleavage which disrupts the DNA-binding part of LexA, leading to derepression of the SOS regulon and eventually DNA repair. The protein is LexA repressor of Corynebacterium efficiens (strain DSM 44549 / YS-314 / AJ 12310 / JCM 11189 / NBRC 100395).